Consider the following 246-residue polypeptide: 4'-phosphopantetheinyl transferase Svp (246 aa).

The span at 223–232 (AGTAEESAEG) shows a compositional bias: low complexity. The tract at residues 223-246 (AGTAEESAEGAGKEATADDRTAVP) is disordered. Basic and acidic residues predominate over residues 233–246 (AGKEATADDRTAVP).

Belongs to the P-Pant transferase superfamily. Gsp/Sfp/HetI/AcpT family.

It catalyses the reaction apo-[ACP] + CoA = holo-[ACP] + adenosine 3',5'-bisphosphate + H(+). Its function is as follows. Transfers the 4'-phosphopantetheine moiety from coenzyme A to a Ser of an acyl-carrier-protein. The enzyme is able to transfer the cofactor to a broad range of enzymes with acyl- or peptidyl-carrier protein domains. The protein is 4'-phosphopantetheinyl transferase Svp (svp) of Streptomyces mobaraensis (Streptoverticillium mobaraense).